A 583-amino-acid chain; its full sequence is Putative ABC transporter ATP-binding protein exp8 (583 aa).

Residues 25-308 enclose the ABC transmembrane type-1 domain; it reads TFLALSFLLA…VTQNFSTLQT (284 aa). Helical transmembrane passes span 26 to 46, 61 to 81, 135 to 155, 159 to 179, and 259 to 279; these read FLAL…PLVA, AVTV…VQYV, MFSG…TTLY, VLDF…FLLV, and LGYA…GITV. An ABC transporter domain is found at 341–574; sequence IRFEHVCFSY…GGTYHKMYSL (234 aa). 374 to 381 contributes to the ATP binding site; the sequence is GHTGSGKS.

Belongs to the ABC transporter superfamily.

The protein resides in the cell membrane. This chain is Putative ABC transporter ATP-binding protein exp8 (exp8), found in Streptococcus pneumoniae serotype 4 (strain ATCC BAA-334 / TIGR4).